An 87-amino-acid polypeptide reads, in one-letter code: DNA-directed RNA polymerase subunit omega (87 aa).

Belongs to the RNA polymerase subunit omega family. In terms of assembly, the RNAP catalytic core consists of 2 alpha, 1 beta, 1 beta' and 1 omega subunit. When a sigma factor is associated with the core the holoenzyme is formed, which can initiate transcription.

It catalyses the reaction RNA(n) + a ribonucleoside 5'-triphosphate = RNA(n+1) + diphosphate. Functionally, promotes RNA polymerase assembly. Latches the N- and C-terminal regions of the beta' subunit thereby facilitating its interaction with the beta and alpha subunits. This chain is DNA-directed RNA polymerase subunit omega, found in Alcanivorax borkumensis (strain ATCC 700651 / DSM 11573 / NCIMB 13689 / SK2).